A 121-amino-acid polypeptide reads, in one-letter code: Small ribosomal subunit protein uS13 (121 aa).

The disordered stretch occupies residues 93 to 121; it reads RGLPMRGQRTRTNARTRKGPRKGAAALKK.

This sequence belongs to the universal ribosomal protein uS13 family. Part of the 30S ribosomal subunit. Forms a loose heterodimer with protein S19. Forms two bridges to the 50S subunit in the 70S ribosome.

Located at the top of the head of the 30S subunit, it contacts several helices of the 16S rRNA. In the 70S ribosome it contacts the 23S rRNA (bridge B1a) and protein L5 of the 50S subunit (bridge B1b), connecting the 2 subunits; these bridges are implicated in subunit movement. Contacts the tRNAs in the A and P-sites. The polypeptide is Small ribosomal subunit protein uS13 (Acidovorax ebreus (strain TPSY) (Diaphorobacter sp. (strain TPSY))).